The chain runs to 81 residues: ATP synthase subunit c (81 aa).

2 helical membrane-spanning segments follow: residues 5–25 (VAAA…IGPG) and 57–77 (LAFM…LLFA).

The protein belongs to the ATPase C chain family. F-type ATPases have 2 components, F(1) - the catalytic core - and F(0) - the membrane proton channel. F(1) has five subunits: alpha(3), beta(3), gamma(1), delta(1), epsilon(1). F(0) has four main subunits: a(1), b(1), b'(1) and c(10-14). The alpha and beta chains form an alternating ring which encloses part of the gamma chain. F(1) is attached to F(0) by a central stalk formed by the gamma and epsilon chains, while a peripheral stalk is formed by the delta, b and b' chains.

Its subcellular location is the cellular thylakoid membrane. Functionally, f(1)F(0) ATP synthase produces ATP from ADP in the presence of a proton or sodium gradient. F-type ATPases consist of two structural domains, F(1) containing the extramembraneous catalytic core and F(0) containing the membrane proton channel, linked together by a central stalk and a peripheral stalk. During catalysis, ATP synthesis in the catalytic domain of F(1) is coupled via a rotary mechanism of the central stalk subunits to proton translocation. Its function is as follows. Key component of the F(0) channel; it plays a direct role in translocation across the membrane. A homomeric c-ring of between 10-14 subunits forms the central stalk rotor element with the F(1) delta and epsilon subunits. In Microcystis aeruginosa (strain NIES-843 / IAM M-2473), this protein is ATP synthase subunit c.